The sequence spans 159 residues: Phosphopantetheine adenylyltransferase (159 aa).

Residue threonine 10 coordinates substrate. Residues 10-11 and histidine 18 contribute to the ATP site; that span reads TF. Positions 42, 74, and 88 each coordinate substrate. ATP contacts are provided by residues 89 to 91, glutamate 99, and 124 to 130; these read GLR and WSFISSS.

The protein belongs to the bacterial CoaD family. In terms of assembly, homohexamer. The cofactor is Mg(2+).

Its subcellular location is the cytoplasm. It catalyses the reaction (R)-4'-phosphopantetheine + ATP + H(+) = 3'-dephospho-CoA + diphosphate. It functions in the pathway cofactor biosynthesis; coenzyme A biosynthesis; CoA from (R)-pantothenate: step 4/5. In terms of biological role, reversibly transfers an adenylyl group from ATP to 4'-phosphopantetheine, yielding dephospho-CoA (dPCoA) and pyrophosphate. This chain is Phosphopantetheine adenylyltransferase, found in Shigella sonnei (strain Ss046).